The primary structure comprises 260 residues: Isopentenyl phosphate kinase (260 aa).

Residue 6–10 (KLGGS) coordinates ATP. Gly55 provides a ligand contact to substrate. Gly56 contacts ATP. Substrate contacts are provided by His60 and Gly159. Residues Asp180, Gly217, and Lys221 each coordinate ATP.

This sequence belongs to the isopentenyl phosphate kinase family. As to quaternary structure, homodimer.

It catalyses the reaction isopentenyl phosphate + ATP = isopentenyl diphosphate + ADP. Its function is as follows. Catalyzes the formation of isopentenyl diphosphate (IPP), the building block of all isoprenoids. Has no activity with farnesyl phosphate. The sequence is that of Isopentenyl phosphate kinase from Methanocaldococcus jannaschii (strain ATCC 43067 / DSM 2661 / JAL-1 / JCM 10045 / NBRC 100440) (Methanococcus jannaschii).